The sequence spans 256 residues: Acetylglutamate kinase (256 aa).

Substrate is bound by residues 40 to 41, Arg62, and Asn154; that span reads GG.

It belongs to the acetylglutamate kinase family. ArgB subfamily.

It localises to the cytoplasm. It carries out the reaction N-acetyl-L-glutamate + ATP = N-acetyl-L-glutamyl 5-phosphate + ADP. It functions in the pathway amino-acid biosynthesis; L-arginine biosynthesis; N(2)-acetyl-L-ornithine from L-glutamate: step 2/4. Its function is as follows. Catalyzes the ATP-dependent phosphorylation of N-acetyl-L-glutamate. This is Acetylglutamate kinase from Staphylococcus aureus (strain bovine RF122 / ET3-1).